The primary structure comprises 472 residues: FAD-dependent monooxygenase ltmM (472 aa).

Residues 7–27 (VIIVGGSVAGLSLAHCLEKIG) traverse the membrane as a helical segment. Residues glutamate 34, glycine 48, and arginine 107 each contribute to the FAD site. Asparagine 186 carries an N-linked (GlcNAc...) asparagine glycan. Residues aspartate 306 and alanine 319 each coordinate FAD. The chain crosses the membrane as a helical span at residues 450–470 (IVYALYLVAAAAFILYCLSSL).

This sequence belongs to the paxM FAD-dependent monooxygenase family. Requires FAD as cofactor.

The protein localises to the membrane. It participates in secondary metabolite biosynthesis. In terms of biological role, FAD-dependent monooxygenase; part of the gene cluster that mediates the biosynthesis of lolitrems, indole-diterpene mycotoxins that are potent tremorgens in mammals, and are synthesized by clavicipitaceous fungal endophytes in association with their grass hosts. The geranylgeranyl diphosphate (GGPP) synthase ltmG is proposed to catalyze the first step in lolitremB biosynthesis. LtmG catalyzes a series of iterative condensations of isopentenyl diphosphate (IPP) with dimethylallyl diphosphate (DMAPP), geranyl diphosphate (GPP), and farnesyl diphosphate (FPP), to form GGPP. GGPP then condenses with indole-3-glycerol phosphate to form 3-geranylgeranylindole, an acyclic intermediate, to be incorporated into paxilline. Either ltmG or ltmC could be responsible for this step, as both are putative prenyl transferases. The FAD-dependent monooxygenase ltmM then catalyzes the epoxidation of the two terminal alkenes of the geranylgeranyl moiety, which is subsequently cyclized by ltmB, to paspaline. The cytochrome P450 monooxygenases ltmQ and ltmP can sequentially oxidize paspaline to terpendole E and terpendole F. Alternatively, ltmP converts paspaline to an intermediate which is oxidized by ltmQ to terpendole F. LtmF, ltmK, ltmE and ltmJ appear to be unique to the epichloe endophytes. The prenyltransferase ltmF is involved in the 27-hydroxyl-O-prenylation. The cytochrome P450 monooxygenase ltmK is required for the oxidative acetal ring formation. The multi-functional prenyltransferase ltmE is required for C20- and C21-prenylations of the indole ring of paspalanes and acts together with the cytochrome P450 monooxygenase ltmJ to yield lolitremanes by multiple oxidations and ring closures. The stereoisomer pairs of lolitriol and lolitrem N or lolitrem B and lolitrem F may be attributed to variations in the way in which ring closure can occur under the action of ltmJ. While the major product of this pathway is lolitrem B, the prenyl transferases and cytochrome P450 monooxygenases identified in this pathway have a remarkable versatility in their regio- and stereo-specificities to generate a diverse range of metabolites that are products of a metabolic grid rather than a linear pathway. The sequence is that of FAD-dependent monooxygenase ltmM (ltmM) from Epichloe festucae var. lolii (Neotyphodium lolii).